The following is a 385-amino-acid chain: Putative transporter YthQ (385 aa).

8 helical membrane passes run 24–44 (AVID…FVIY), 67–87 (WLYA…FLME), 106–128 (YALL…IVLP), 133–155 (SVLI…HIFF), 176–193 (TLVR…IVFT), 197–214 (LLAL…IRSL), 304–324 (AFTV…LLVY), and 365–385 (ILHY…LLFT).

Its subcellular location is the cell membrane. This chain is Putative transporter YthQ (ythQ), found in Bacillus subtilis (strain 168).